The sequence spans 589 residues: MASQAANLWVLLGLGLAGILMLTKKLKKTVREDFGAFIDKLMLLPPPQPAPPKAPHPLTGLTFAVSDVFDITGYVTGFGHPDWVRTHEAASSTSPVVSTLVEGGATCVGKTVVDEFAFSISGENKHYDSPTNPAAPTRIPGGACSGAAVAVATNAVDFALGIDTVGGVRVPAGYCGVLGFKSSYGAISNTGIIPVSSSLDSVGWFARDPNTLRRVGHVLLQLPFATQRNPRQIILADDCFQLLKIPVDRITQVVTKSAEKLFGRQLLKHQNLETYFETKVPSLKEFARTKAIANTKVSTSRLLANVMQLLQRHEFLQNHGDWINTVKPAIDPVILSQVCENPELTNEETENLNAIRNETRVAIGSLLKDDGILVIPTLPAVPPKLGSKEITSEDYQNRASSLLSIASISGCCQVTVPLGHHEKCPISVSFIGRHGGDRFLLDTVQTMYPSLQEYSSIVTDPKSSKKAITKEESAEIAKEKGNQAFKEKLWQKAIGLYSEAIKLSDNNATYYSNRAAAYLELGGFLQAEEDCTKAITLDKKNVKAYLRRGTAREMLGDCKGAIEDFRYALVLEPNNKRASLSAERLRKFQ.

Methionine 1 is a topological domain (chloroplast intermembrane). Residues 2 to 22 (ASQAANLWVLLGLGLAGILML) form a helical membrane-spanning segment. The Cytoplasmic segment spans residues 23-141 (TKKLKKTVRE…NPAAPTRIPG (119 aa)). The helical transmembrane segment at 142–162 (GACSGAAVAVATNAVDFALGI) threads the bilayer. Topologically, residues 163 to 398 (DTVGGVRVPA…EITSEDYQNR (236 aa)) are chloroplast intermembrane. The helical transmembrane segment at 399–419 (ASSLLSIASISGCCQVTVPLG) threads the bilayer. Residues 420-589 (HHEKCPISVS…LSAERLRKFQ (170 aa)) are Cytoplasmic-facing. TPR repeat units lie at residues 474 to 507 (AEIA…SDNN), 508 to 541 (ATYY…DKKN), and 542 to 575 (VKAY…EPNN).

Part of the Toc complex and of the intermembrane space complex. Expressed in roots, cotyledons, leaves and flower buds.

The protein resides in the plastid. It localises to the chloroplast outer membrane. Its function is as follows. Chaperone receptor mediating Hsp90-dependent protein targeting to chloroplasts. Bi-functional preprotein receptor acting on both sides of the membrane. Not essential for an efficient import of pre-proteins into plastids. The sequence is that of Outer envelope protein 64, chloroplastic (OEP64) from Arabidopsis thaliana (Mouse-ear cress).